Reading from the N-terminus, the 1228-residue chain is DNA repair protein rad5 (1228 aa).

Disordered regions lie at residues methionine 1–threonine 96, proline 194–serine 242, glutamine 280–serine 302, and lysine 445–glutamate 474. Positions proline 34–proline 43 are enriched in low complexity. Residues histidine 70–glutamate 83 show a composition bias toward acidic residues. A compositionally biased stretch (polar residues) spans proline 211–threonine 237. The segment covering lysine 445–aspartate 454 has biased composition (basic and acidic residues). A compositionally biased stretch (acidic residues) spans glutamate 465–glutamate 474. Residues proline 574–glutamate 784 enclose the Helicase ATP-binding domain. Residue aspartate 587–threonine 594 participates in ATP binding. A DEAH box motif is present at residues aspartate 735–histidine 738. The RING-type zinc finger occupies cysteine 967–arginine 1012. Positions alanine 1060–glutamine 1216 constitute a Helicase C-terminal domain.

Belongs to the SNF2/RAD54 helicase family.

Its subcellular location is the cytoplasm. The protein resides in the nucleus. Probable helicase, member of the UBC2/RAD6 epistasis group. Functions with DNA repair protein uvs-2/rad18 in error-free postreplication DNA repair. Involved in the maintenance of wild-type rates of instability of simple repetitive sequences such as poly(GT) repeats. Seems to be involved in maintaining a balance which acts in favor of error-prone non-homologous joining during DNA double-strand breaks repairs. This is DNA repair protein rad5 (mus-41) from Neurospora crassa (strain ATCC 24698 / 74-OR23-1A / CBS 708.71 / DSM 1257 / FGSC 987).